We begin with the raw amino-acid sequence, 212 residues long: Transcriptional regulator GfcR (212 aa).

Belongs to the purine/pyrimidine phosphoribosyltransferase family. GfcR subfamily.

DNA-binding transcriptional regulator that functions as a regulator of central sugar catabolic pathways. This Halobacterium salinarum (strain ATCC 29341 / DSM 671 / R1) protein is Transcriptional regulator GfcR.